A 509-amino-acid chain; its full sequence is ATP synthase subunit alpha (509 aa).

169-176 (GDRQTGKT) contributes to the ATP binding site.

Belongs to the ATPase alpha/beta chains family. As to quaternary structure, F-type ATPases have 2 components, CF(1) - the catalytic core - and CF(0) - the membrane proton channel. CF(1) has five subunits: alpha(3), beta(3), gamma(1), delta(1), epsilon(1). CF(0) has three main subunits: a(1), b(2) and c(9-12). The alpha and beta chains form an alternating ring which encloses part of the gamma chain. CF(1) is attached to CF(0) by a central stalk formed by the gamma and epsilon chains, while a peripheral stalk is formed by the delta and b chains.

The protein localises to the cell inner membrane. The catalysed reaction is ATP + H2O + 4 H(+)(in) = ADP + phosphate + 5 H(+)(out). Its function is as follows. Produces ATP from ADP in the presence of a proton gradient across the membrane. The alpha chain is a regulatory subunit. This chain is ATP synthase subunit alpha, found in Novosphingobium aromaticivorans (strain ATCC 700278 / DSM 12444 / CCUG 56034 / CIP 105152 / NBRC 16084 / F199).